A 431-amino-acid chain; its full sequence is UDP-N-acetylmuramoylalanine--D-glutamate ligase (431 aa).

111–117 contributes to the ATP binding site; sequence GTDGKST.

This sequence belongs to the MurCDEF family.

The protein resides in the cytoplasm. It catalyses the reaction UDP-N-acetyl-alpha-D-muramoyl-L-alanine + D-glutamate + ATP = UDP-N-acetyl-alpha-D-muramoyl-L-alanyl-D-glutamate + ADP + phosphate + H(+). It functions in the pathway cell wall biogenesis; peptidoglycan biosynthesis. In terms of biological role, cell wall formation. Catalyzes the addition of glutamate to the nucleotide precursor UDP-N-acetylmuramoyl-L-alanine (UMA). This is UDP-N-acetylmuramoylalanine--D-glutamate ligase from Petrotoga mobilis (strain DSM 10674 / SJ95).